A 687-amino-acid polypeptide reads, in one-letter code: Chloride channel protein ClC-Kb (687 aa).

The Cytoplasmic segment spans residues methionine 1 to tryptophan 50. A run of 2 helical transmembrane segments spans residues tyrosine 51–tyrosine 82 and leucine 91–serine 111. An intramembrane region (helical) is located at residues proline 116–lysine 127. Residue serine 121 participates in chloride binding. 2 helical membrane-spanning segments follow: residues isoleucine 141–threonine 160 and isoleucine 161–leucine 180. N-linked (GlcNAc...) asparagine glycosylation is present at asparagine 193. An intramembrane region (helical) is located at residues alanine 203–isoleucine 224. A helical membrane pass occupies residues tyrosine 236–valine 255. Ca(2+)-binding residues include glutamate 259, glutamate 261, aspartate 278, and glutamate 281. Transmembrane regions (helical) follow at residues isoleucine 282–leucine 310 and proline 325–proline 342. The helical intramembrane region spans alanine 349–threonine 360. Helical transmembrane passes span glycine 400–proline 420 and isoleucine 421–phenylalanine 440. Phenylalanine 426 serves as a coordination point for chloride. The segment at residues glycine 464 to valine 496 is an intramembrane region (helical). Residues proline 500–tyrosine 520 form a helical membrane-spanning segment. Topologically, residues aspartate 521–lysine 687 are cytoplasmic. CBS domains follow at residues methionine 551–serine 609 and cysteine 626–lysine 687.

It belongs to the chloride channel (TC 2.A.49) family. CLCNKB subfamily. As to quaternary structure, homodimer. Interacts with BSND. In terms of processing, N-glycosylated. In terms of tissue distribution, expressed predominantly in the kidney. Expressed in all segments of the nephron examined, including the S2 segment and the glomerulus.

The protein localises to the basolateral cell membrane. The catalysed reaction is chloride(in) = chloride(out). It catalyses the reaction iodide(out) = iodide(in). The enzyme catalyses nitrate(in) = nitrate(out). It carries out the reaction bromide(in) = bromide(out). Its function is as follows. Anion-selective channel permeable to small monovalent anions with ion selectivity for chloride &gt; bromide &gt; nitrate &gt; iodide. Forms a homodimeric channel where each subunit has its own ion conduction pathway. May conduct double-barreled currents controlled by two types of gates, two fast gates that control each subunit independently and a slow common gate that opens and shuts off both subunits simultaneously. Assembles with the regulatory subunit BSND/Barttin for sorting at the basolateral plasma membrane domain and functional switch to the ion conducting state. CLCNKB:BSND channels display mostly a linear current-voltage relationship controlled by common gate. Mediates chloride conductance along nephron segments, namely the thick ascending limb of Henle's loop, convoluted tubule and the collecting duct, contributing to the maintenance of systemic acid-base and electrolyte homeostasis. Conducts chloride currents in the stria vascularis of the inner ear to establish the endocochlear potential necessary for normal hearing. This is Chloride channel protein ClC-Kb from Rattus norvegicus (Rat).